A 151-amino-acid chain; its full sequence is SsrA-binding protein (151 aa).

It belongs to the SmpB family.

The protein resides in the cytoplasm. Its function is as follows. Required for rescue of stalled ribosomes mediated by trans-translation. Binds to transfer-messenger RNA (tmRNA), required for stable association of tmRNA with ribosomes. tmRNA and SmpB together mimic tRNA shape, replacing the anticodon stem-loop with SmpB. tmRNA is encoded by the ssrA gene; the 2 termini fold to resemble tRNA(Ala) and it encodes a 'tag peptide', a short internal open reading frame. During trans-translation Ala-aminoacylated tmRNA acts like a tRNA, entering the A-site of stalled ribosomes, displacing the stalled mRNA. The ribosome then switches to translate the ORF on the tmRNA; the nascent peptide is terminated with the 'tag peptide' encoded by the tmRNA and targeted for degradation. The ribosome is freed to recommence translation, which seems to be the essential function of trans-translation. The chain is SsrA-binding protein from Chlamydia muridarum (strain MoPn / Nigg).